The chain runs to 66 residues: Large ribosomal subunit protein bL33c (66 aa).

This sequence belongs to the bacterial ribosomal protein bL33 family.

The protein resides in the plastid. It is found in the chloroplast. The polypeptide is Large ribosomal subunit protein bL33c (Welwitschia mirabilis (Tree tumbo)).